Here is a 239-residue protein sequence, read N- to C-terminus: Small ribosomal subunit protein uS2 (239 aa).

It belongs to the universal ribosomal protein uS2 family.

The polypeptide is Small ribosomal subunit protein uS2 (Francisella philomiragia subsp. philomiragia (strain ATCC 25017 / CCUG 19701 / FSC 153 / O#319-036)).